The sequence spans 529 residues: Peptide chain release factor 3 (529 aa).

The tr-type G domain occupies 11–280 (AKRRTFAIIS…GLVEWAPAPM (270 aa)). Residues 20–27 (SHPDAGKT), 88–92 (DTPGH), and 142–145 (NKLD) contribute to the GTP site.

The protein belongs to the TRAFAC class translation factor GTPase superfamily. Classic translation factor GTPase family. PrfC subfamily.

It localises to the cytoplasm. Increases the formation of ribosomal termination complexes and stimulates activities of RF-1 and RF-2. It binds guanine nucleotides and has strong preference for UGA stop codons. It may interact directly with the ribosome. The stimulation of RF-1 and RF-2 is significantly reduced by GTP and GDP, but not by GMP. This Yersinia pseudotuberculosis serotype O:1b (strain IP 31758) protein is Peptide chain release factor 3.